The primary structure comprises 184 residues: Leucine-rich repeat-containing protein 20 (184 aa).

6 LRR repeats span residues 23 to 44 (GSDTLDLADCKLVSFPICIYKV), 51 to 72 (QIHLITLANNELKSLTSKFMTT), 75 to 96 (QLRELRLEGNYLFRLPNEVSSL), 98 to 120 (HLRAIDLSRNQFQDFPEQLTTLP), 121 to 141 (ALETINLEENEIVDVPVEKLA), and 145 to 167 (ALRVINLRLNPLSADVRVIAPPL). At serine 175 the chain carries Phosphoserine.

The chain is Leucine-rich repeat-containing protein 20 (Lrrc20) from Mus musculus (Mouse).